The following is a 237-amino-acid chain: Indole-3-glycerol phosphate synthase (237 aa).

Belongs to the TrpC family.

It carries out the reaction 1-(2-carboxyphenylamino)-1-deoxy-D-ribulose 5-phosphate + H(+) = (1S,2R)-1-C-(indol-3-yl)glycerol 3-phosphate + CO2 + H2O. It functions in the pathway amino-acid biosynthesis; L-tryptophan biosynthesis; L-tryptophan from chorismate: step 4/5. This chain is Indole-3-glycerol phosphate synthase, found in Thermoplasma volcanium (strain ATCC 51530 / DSM 4299 / JCM 9571 / NBRC 15438 / GSS1).